The sequence spans 313 residues: Curved DNA-binding protein (313 aa).

One can recognise a J domain in the interval 5 to 69; that stretch reads DYYKILGVSR…EKRKAYDAIG (65 aa). The tract at residues 71-93 is disordered; it reads GWKQGQGFTPPPGWESRPGGEGV.

It localises to the cytoplasm. The protein localises to the nucleoid. DNA-binding protein that preferentially recognizes a curved DNA sequence. It is probably a functional analog of DnaJ; displays overlapping activities with DnaJ, but functions under different conditions, probably acting as a molecular chaperone in an adaptive response to environmental stresses other than heat shock. Lacks autonomous chaperone activity; binds native substrates and targets them for recognition by DnaK. Its activity is inhibited by the binding of CbpM. The sequence is that of Curved DNA-binding protein from Coxiella burnetii (strain Dugway 5J108-111).